A 314-amino-acid polypeptide reads, in one-letter code: Probable cell division protein WhiA (314 aa).

Positions 282–314 (SLKELGELCRPPVSKSGAAHRMRQLMALAESLE) form a DNA-binding region, H-T-H motif.

The protein belongs to the WhiA family.

Its function is as follows. Involved in cell division and chromosome segregation. In Symbiobacterium thermophilum (strain DSM 24528 / JCM 14929 / IAM 14863 / T), this protein is Probable cell division protein WhiA.